A 119-amino-acid polypeptide reads, in one-letter code: Large ribosomal subunit protein eL31z (119 aa).

The protein belongs to the eukaryotic ribosomal protein eL31 family.

The polypeptide is Large ribosomal subunit protein eL31z (RPL31A) (Arabidopsis thaliana (Mouse-ear cress)).